The chain runs to 558 residues: CTP synthase (558 aa).

Positions 1–267 are amidoligase domain; it reads MAKFVFVTGG…CLEMLDVLNL (267 aa). Position 13 (Ser13) interacts with CTP. Ser13 contributes to the UTP binding site. ATP is bound by residues 14–19 and Asp71; that span reads SIGKGI. 2 residues coordinate Mg(2+): Asp71 and Glu141. Residues 148 to 150, 188 to 193, and Lys224 each bind CTP; these read DIE and KTKPTQ. UTP-binding positions include 188 to 193 and Lys224; that span reads KTKPTQ. The Glutamine amidotransferase type-1 domain occupies 292–534; that stretch reads KVALVGKYVQ…IEAAQLRLPA (243 aa). Gly354 provides a ligand contact to L-glutamine. Cys381 acts as the Nucleophile; for glutamine hydrolysis in catalysis. Residues 382 to 385, Glu405, and Arg462 each bind L-glutamine; that span reads LGMQ. Residues His507 and Glu509 contribute to the active site. The segment at 536–558 is disordered; the sequence is PDEALRRQSQTNISAQEKPSRIG. Residues 542–552 show a composition bias toward polar residues; sequence RQSQTNISAQE.

The protein belongs to the CTP synthase family. Homotetramer.

It carries out the reaction UTP + L-glutamine + ATP + H2O = CTP + L-glutamate + ADP + phosphate + 2 H(+). The enzyme catalyses L-glutamine + H2O = L-glutamate + NH4(+). The catalysed reaction is UTP + NH4(+) + ATP = CTP + ADP + phosphate + 2 H(+). It participates in pyrimidine metabolism; CTP biosynthesis via de novo pathway; CTP from UDP: step 2/2. Allosterically activated by GTP, when glutamine is the substrate; GTP has no effect on the reaction when ammonia is the substrate. The allosteric effector GTP functions by stabilizing the protein conformation that binds the tetrahedral intermediate(s) formed during glutamine hydrolysis. Inhibited by the product CTP, via allosteric rather than competitive inhibition. In terms of biological role, catalyzes the ATP-dependent amination of UTP to CTP with either L-glutamine or ammonia as the source of nitrogen. Regulates intracellular CTP levels through interactions with the four ribonucleotide triphosphates. The chain is CTP synthase from Prochlorococcus marinus (strain MIT 9303).